A 109-amino-acid chain; its full sequence is uncharacterized protein (109 aa).

The segment at 1–26 is disordered; that stretch reads MTPRSLPRYGNSSRRKSFPMHRPSNV.

This is an uncharacterized protein from Mycobacterium bovis (strain ATCC BAA-935 / AF2122/97).